The sequence spans 535 residues: Calcium-dependent protein kinase 5 (535 aa).

The tract at residues 1 to 46 is disordered; it reads MGNACRGSFGGKTFQGYPQPQDHSESNSNPKHNSDSPKPKKEQQPL. A lipid anchor (N-myristoyl glycine) is attached at G2. C5 carries S-palmitoyl cysteine lipidation. Residues 32 to 43 are compositionally biased toward basic and acidic residues; sequence HNSDSPKPKKEQ. In terms of domain architecture, Protein kinase spans 72 to 330; the sequence is YTLGRKLGQG…AHEVLCHPWI (259 aa). ATP-binding positions include 78–86 and K101; that span reads LGQGQFGTT. The Proton acceptor role is filled by D196. Residues 336-366 are autoinhibitory domain; that stretch reads APDRALDPAVLSRLKHFSAMNKLKKMALRVI. 4 consecutive EF-hand domains span residues 373–408, 409–444, 445–480, and 484–514; these read EEIAGLKEMFKAMDTDNSGAITFDELKAGLRKYGST, LKDIEIRELMDAADVDNSGTIDYGEFIAATIHLNKL, DREEHLMAAFQYFDKDGSGYITVDELQQACADHNIT, and FEDIIREVDQDNDGRIDYGEFVAMMQKGNPC. Ca(2+) contacts are provided by D386, D388, S390, E397, D422, D424, S426, T428, E433, D458, D460, S462, Y464, E469, D492, D494, D496, R498, and E503.

The protein belongs to the protein kinase superfamily. Ser/Thr protein kinase family. CDPK subfamily.

It is found in the cell membrane. The enzyme catalyses L-seryl-[protein] + ATP = O-phospho-L-seryl-[protein] + ADP + H(+). It catalyses the reaction L-threonyl-[protein] + ATP = O-phospho-L-threonyl-[protein] + ADP + H(+). Its activity is regulated as follows. Activated by calcium. Autophosphorylation may play an important role in the regulation of the kinase activity. Functionally, regulates the production of reactive oxygen species (ROS) by NADPH oxidase. The chain is Calcium-dependent protein kinase 5 (CPK5) from Solanum tuberosum (Potato).